We begin with the raw amino-acid sequence, 326 residues long: Flap endonuclease 1 (326 aa).

Residues Met1–Lys98 form an N-domain region. Residues Asp27, Asp80, Glu152, Glu154, Asp173, Asp175, and Asp224 each coordinate Mg(2+). The tract at residues Asp116–Lys245 is I-domain. Residues Ser318–Phe326 are interaction with PCNA.

This sequence belongs to the XPG/RAD2 endonuclease family. FEN1 subfamily. In terms of assembly, interacts with PCNA. PCNA stimulates the nuclease activity without altering cleavage specificity. Mg(2+) serves as cofactor.

Its function is as follows. Structure-specific nuclease with 5'-flap endonuclease and 5'-3' exonuclease activities involved in DNA replication and repair. During DNA replication, cleaves the 5'-overhanging flap structure that is generated by displacement synthesis when DNA polymerase encounters the 5'-end of a downstream Okazaki fragment. Binds the unpaired 3'-DNA end and kinks the DNA to facilitate 5' cleavage specificity. Cleaves one nucleotide into the double-stranded DNA from the junction in flap DNA, leaving a nick for ligation. Also involved in the base excision repair (BER) pathway. Acts as a genome stabilization factor that prevents flaps from equilibrating into structures that lead to duplications and deletions. Also possesses 5'-3' exonuclease activity on nicked or gapped double-stranded DNA. The chain is Flap endonuclease 1 from Methanococcus aeolicus (strain ATCC BAA-1280 / DSM 17508 / OCM 812 / Nankai-3).